The primary structure comprises 325 residues: Aldo-keto reductase family 1 member A1 (325 aa).

Residue A2 is modified to N-acetylalanine. S4 is subject to Phosphoserine. NADP(+) contacts are provided by residues G11–G20, T21, W22, and D45. The active-site Proton donor is Y50. K127 carries the post-translational modification N6-acetyllysine; alternate. The residue at position 127 (K127) is an N6-succinyllysine; alternate. An N6-succinyllysine modification is found at K145. NADP(+)-binding residues include S162, N163, S211, L213, S215, S216, K263, S264, V265, T266, R269, Q272, and N273. The residue at position 211 (S211) is a Phosphoserine.

Belongs to the aldo/keto reductase family. As to quaternary structure, monomer.

The protein localises to the cytoplasm. It is found in the cytosol. The protein resides in the apical cell membrane. The catalysed reaction is a primary alcohol + NADP(+) = an aldehyde + NADPH + H(+). The enzyme catalyses glycerol + NADP(+) = D-glyceraldehyde + NADPH + H(+). It catalyses the reaction glycerol + NADP(+) = L-glyceraldehyde + NADPH + H(+). It carries out the reaction L-gulonate + NADP(+) = aldehydo-D-glucuronate + NADPH + H(+). The catalysed reaction is L-gulono-1,4-lactone + NADP(+) = D-glucurono-3,6-lactone + NADPH + H(+). The enzyme catalyses allyl alcohol + NADP(+) = acrolein + NADPH + H(+). It catalyses the reaction hydroxyacetone + NADP(+) = methylglyoxal + NADPH + H(+). It carries out the reaction 3-deoxyfructose + NADP(+) = 3-deoxyglucosone + NADPH + H(+). The catalysed reaction is (R)-mevalonate + NADP(+) = (R)-mevaldate + NADPH + H(+). The enzyme catalyses pyridine 3-methanol + NADP(+) = pyridine-3-carbaldehyde + NADPH + H(+). It catalyses the reaction S-nitroso-CoA + NADPH + H(+) = sulfinamide-CoA + NADP(+). It carries out the reaction S-nitrosoglutathione + NADPH + H(+) = S-(hydroxysulfenamide)glutathione + NADP(+). Functionally, catalyzes the NADPH-dependent reduction of a wide variety of carbonyl-containing compounds to their corresponding alcohols. Displays enzymatic activity towards endogenous metabolites such as aromatic and aliphatic aldehydes, ketones, monosaccharides and bile acids, with a preference for negatively charged substrates, such as glucuronate and succinic semialdehyde. Plays an important role in ascorbic acid biosynthesis by catalyzing the reduction of D-glucuronic acid and D-glucurono-gamma-lactone. Functions as a detoxifiying enzyme by reducing a range of toxic aldehydes. Reduces methylglyoxal and 3-deoxyglucosone, which are present at elevated levels under hyperglycemic conditions and are cytotoxic. Involved also in the detoxification of lipid-derived aldehydes like acrolein. Plays a role in the activation of procarcinogens, such as polycyclic aromatic hydrocarbon trans-dihydrodiols, and in the metabolism of various xenobiotics and drugs. Also acts as an inhibitor of protein S-nitrosylation by mediating degradation of S-nitroso-coenzyme A (S-nitroso-CoA), a cofactor required to S-nitrosylate proteins. S-nitroso-CoA reductase activity is involved in reprogramming intermediary metabolism in renal proximal tubules, notably by inhibiting protein S-nitrosylation of isoform 2 of PKM (PKM2). Also acts as a S-nitroso-glutathione reductase by catalyzing the NADPH-dependent reduction of S-nitrosoglutathione. Displays no reductase activity towards retinoids. The protein is Aldo-keto reductase family 1 member A1 (AKR1A1) of Sus scrofa (Pig).